Here is a 478-residue protein sequence, read N- to C-terminus: Argininosuccinate synthase (478 aa).

Residues 17–25 and Ala-43 contribute to the ATP site; that span reads AFSGGLDTS. Residue Tyr-99 coordinates L-citrulline. ATP-binding residues include Gly-129 and Thr-131. Positions 131, 135, and 136 each coordinate L-aspartate. Residue Asn-135 participates in L-citrulline binding. Asp-136 contacts ATP. L-citrulline contacts are provided by Arg-139 and Ser-192. ATP is bound at residue Asp-194. L-citrulline-binding residues include Thr-201, Glu-203, and Glu-280.

It belongs to the argininosuccinate synthase family. Type 2 subfamily. Homotetramer.

It localises to the cytoplasm. It catalyses the reaction L-citrulline + L-aspartate + ATP = 2-(N(omega)-L-arginino)succinate + AMP + diphosphate + H(+). The protein operates within amino-acid biosynthesis; L-arginine biosynthesis; L-arginine from L-ornithine and carbamoyl phosphate: step 2/3. The polypeptide is Argininosuccinate synthase (Leifsonia xyli subsp. xyli (strain CTCB07)).